Consider the following 896-residue polypeptide: Serine/threonine-protein kinase TAO3 (896 aa).

The Protein kinase domain maps to 24 to 277 (FVDLHEIGHG…SLELLRHDFV (254 aa)). ATP is bound by residues 30–38 (IGHGSFGAV) and Lys-53. The active-site Proton acceptor is the Asp-147. 2 disordered regions span residues 316 to 366 (SRNG…SVNS) and 403 to 423 (DEAD…VQSQ). The segment covering 334-348 (GTSLTRKMDSLGSNH) has biased composition (polar residues). Residues 349–366 (SIPSTSVSTGSQSSSVNS) are compositionally biased toward low complexity. Residues 403-414 (DEADHRDPRPEL) show a composition bias toward basic and acidic residues. 3 coiled-coil regions span residues 450 to 513 (EQEN…SKRQ), 545 to 650 (SFLE…LIRQ), and 752 to 873 (LKSL…IETF). Basic and acidic residues predominate over residues 565–587 (LNEDHSTPKKEKQERISKHKENL). Positions 565 to 593 (LNEDHSTPKKEKQERISKHKENLQHTQAE) are disordered.

This sequence belongs to the protein kinase superfamily. STE Ser/Thr protein kinase family. STE20 subfamily.

The protein localises to the cytoplasm. It localises to the cell membrane. The protein resides in the membrane raft. It is found in the lipid droplet. The enzyme catalyses L-seryl-[protein] + ATP = O-phospho-L-seryl-[protein] + ADP + H(+). It carries out the reaction L-threonyl-[protein] + ATP = O-phospho-L-threonyl-[protein] + ADP + H(+). Its function is as follows. Serine/threonine-protein kinase that acts as a regulator of the p38/MAPK14 stress-activated MAPK cascade and of the MAPK8/JNK cascade. In response to DNA damage, involved in the G2/M transition DNA damage checkpoint by activating the p38/MAPK14 stress-activated MAPK cascade, probably by mediating phosphorylation of upstream MAP kinase kinases. Inhibits basal activity of the MAPK8/JNK cascade. The polypeptide is Serine/threonine-protein kinase TAO3 (taok3) (Xenopus laevis (African clawed frog)).